Consider the following 139-residue polypeptide: ATP synthase epsilon chain (139 aa).

It belongs to the ATPase epsilon chain family. In terms of assembly, F-type ATPases have 2 components, CF(1) - the catalytic core - and CF(0) - the membrane proton channel. CF(1) has five subunits: alpha(3), beta(3), gamma(1), delta(1), epsilon(1). CF(0) has three main subunits: a, b and c.

The protein localises to the cell inner membrane. Functionally, produces ATP from ADP in the presence of a proton gradient across the membrane. The chain is ATP synthase epsilon chain from Acinetobacter baylyi (strain ATCC 33305 / BD413 / ADP1).